A 356-amino-acid polypeptide reads, in one-letter code: Chorismate synthase (356 aa).

Position 44 (R44) interacts with NADP(+). Residues 121-123 (HFS), G278, 293-297 (KPTPS), and R320 each bind FMN.

Belongs to the chorismate synthase family. The cofactor is FMNH2.

It carries out the reaction 5-O-(1-carboxyvinyl)-3-phosphoshikimate = chorismate + phosphate. It functions in the pathway metabolic intermediate biosynthesis; chorismate biosynthesis; chorismate from D-erythrose 4-phosphate and phosphoenolpyruvate: step 7/7. Catalyzes the anti-1,4-elimination of the C-3 phosphate and the C-6 proR hydrogen from 5-enolpyruvylshikimate-3-phosphate (EPSP) to yield chorismate, which is the branch point compound that serves as the starting substrate for the three terminal pathways of aromatic amino acid biosynthesis. This reaction introduces a second double bond into the aromatic ring system. The sequence is that of Chorismate synthase from Pyrococcus abyssi (strain GE5 / Orsay).